Here is a 256-residue protein sequence, read N- to C-terminus: Catechol O-methyltransferase A (256 aa).

The signal sequence occupies residues methionine 1–alanine 27. Asparagine 58 is a glycosylation site (N-linked (GlcNAc...) asparagine). Positions 84, 114, 132, and 183 each coordinate S-adenosyl-L-methionine. A Mg(2+)-binding site is contributed by aspartate 183. Lysine 186 is a substrate binding site. Mg(2+) contacts are provided by aspartate 211 and asparagine 212. Positions 212 and 241 each coordinate substrate.

Belongs to the class I-like SAM-binding methyltransferase superfamily. Cation-dependent O-methyltransferase family. Mg(2+) is required as a cofactor. In terms of tissue distribution, widely expressed. Has higher expression in females compared to males. Strongly expressed in liver and diencephalon. Expressed at lower levels in hindbrain, spinal cord, eye, telencephalon, spleen, gut, gill and muscle. Detected in ovary and testis. In eye, detected in all layers of the retina with highest expression in the inner nuclear layer. In gut, expressed in the lamina propria but has little or no expression in gut epithelium. In brain, has strongest expression near the midline of the telencephalon, in the periventricular gray zone of the optic tectum, in the preglomerular nucleus, and near the walls of the diencephalic ventricle.

It localises to the secreted. The catalysed reaction is a catechol + S-adenosyl-L-methionine = a guaiacol + S-adenosyl-L-homocysteine + H(+). Catalyzes the O-methylation, and thereby the inactivation, of catecholamine neurotransmitters and catechol hormones. Shows highest activity towards catecholestrogens and dobutamine. Also has lower activity towards L-DOPA, dopamine and epinephrine. Active towards the xenobiotic compounds methyl-DOPA, carbidopa, isoproterenol, and apomorphine. This is Catechol O-methyltransferase A from Danio rerio (Zebrafish).